The following is a 644-amino-acid chain: Beta-mannosyltransferase 2 (644 aa).

Residues 1–6 (MRTRLN) lie on the Cytoplasmic side of the membrane. Residues 7 to 27 (FLLLCIASVLSVIWIGVLLTW) traverse the membrane as a helical segment. At 28–644 (NDNNLGGISL…NDKKDLKIRQ (617 aa)) the chain is on the extracellular side. Residue Asn484 is glycosylated (N-linked (GlcNAc...) asparagine). Positions 512–644 (TRGEAERRRR…NDKKDLKIRQ (133 aa)) form a coiled coil. Positions 517–644 (ERRRRVAEER…NDKKDLKIRQ (128 aa)) are disordered.

Belongs to the BMT family.

It is found in the membrane. Its function is as follows. Beta-mannosyltransferase involved in cell wall biosynthesis. Initiates the beta-mannosylation of core N-linked glycans. The polypeptide is Beta-mannosyltransferase 2 (BMT2) (Komagataella phaffii (strain GS115 / ATCC 20864) (Yeast)).